We begin with the raw amino-acid sequence, 135 residues long: Large ribosomal subunit protein uL16c (135 aa).

It belongs to the universal ribosomal protein uL16 family. Part of the 50S ribosomal subunit.

It is found in the plastid. The protein localises to the chloroplast. The polypeptide is Large ribosomal subunit protein uL16c (Euglena gracilis).